We begin with the raw amino-acid sequence, 133 residues long: Fatty acid-binding protein, heart (133 aa).

Residue Val-2 is modified to N-acetylvaline. Thr-8 carries the post-translational modification Phosphothreonine. Position 20 is a phosphotyrosine; by Tyr-kinases (Tyr-20). At Ser-23 the chain carries Phosphoserine. Position 30 is a phosphothreonine (Thr-30). Ser-83 is modified (phosphoserine). (9Z)-octadecenoate is bound at residue 127-129 (RTY). Hexadecanoate is bound at residue 127-129 (RTY). Residue 127–129 (RTY) coordinates octadecanoate.

Belongs to the calycin superfamily. Fatty-acid binding protein (FABP) family.

It localises to the cytoplasm. In terms of biological role, FABPs are thought to play a role in the intracellular transport of long-chain fatty acids and their acyl-CoA esters. The chain is Fatty acid-binding protein, heart (FABP3) from Bos mutus grunniens (Wild yak).